Consider the following 440-residue polypeptide: Glucose-1-phosphate adenylyltransferase (440 aa).

Alpha-D-glucose 1-phosphate-binding positions include Tyr125, Gly190, 205-206 (EK), and Ser223.

It belongs to the bacterial/plant glucose-1-phosphate adenylyltransferase family. As to quaternary structure, homotetramer.

It carries out the reaction alpha-D-glucose 1-phosphate + ATP + H(+) = ADP-alpha-D-glucose + diphosphate. It functions in the pathway glycan biosynthesis; glycogen biosynthesis. Involved in the biosynthesis of ADP-glucose, a building block required for the elongation reactions to produce glycogen. Catalyzes the reaction between ATP and alpha-D-glucose 1-phosphate (G1P) to produce pyrophosphate and ADP-Glc. This is Glucose-1-phosphate adenylyltransferase from Dechloromonas aromatica (strain RCB).